The sequence spans 336 residues: Biotin synthase (336 aa).

The region spanning 54–281 (NAIQLSTLLS…KAMVRLSAGR (228 aa)) is the Radical SAM core domain. 3 residues coordinate [4Fe-4S] cluster: cysteine 69, cysteine 73, and cysteine 76. Residues cysteine 113, cysteine 144, cysteine 204, and arginine 276 each coordinate [2Fe-2S] cluster.

It belongs to the radical SAM superfamily. Biotin synthase family. As to quaternary structure, homodimer. [4Fe-4S] cluster is required as a cofactor. Requires [2Fe-2S] cluster as cofactor.

The catalysed reaction is (4R,5S)-dethiobiotin + (sulfur carrier)-SH + 2 reduced [2Fe-2S]-[ferredoxin] + 2 S-adenosyl-L-methionine = (sulfur carrier)-H + biotin + 2 5'-deoxyadenosine + 2 L-methionine + 2 oxidized [2Fe-2S]-[ferredoxin]. It functions in the pathway cofactor biosynthesis; biotin biosynthesis; biotin from 7,8-diaminononanoate: step 2/2. Catalyzes the conversion of dethiobiotin (DTB) to biotin by the insertion of a sulfur atom into dethiobiotin via a radical-based mechanism. This Burkholderia mallei (strain ATCC 23344) protein is Biotin synthase.